Consider the following 544-residue polypeptide: Probable protein kinase UbiB (544 aa).

The chain crosses the membrane as a helical span at residues Met-1–Leu-21. Residues Asp-123–Leu-500 form the Protein kinase domain. ATP-binding positions include Leu-129–Val-137 and Lys-151. Asp-286 functions as the Proton acceptor in the catalytic mechanism. Helical transmembrane passes span Phe-499–Ala-519 and Asp-520–Trp-540.

Belongs to the ABC1 family. UbiB subfamily.

The protein resides in the cell inner membrane. It participates in cofactor biosynthesis; ubiquinone biosynthesis [regulation]. In terms of biological role, is probably a protein kinase regulator of UbiI activity which is involved in aerobic coenzyme Q (ubiquinone) biosynthesis. The chain is Probable protein kinase UbiB from Sodalis glossinidius (strain morsitans).